A 25-amino-acid chain; its full sequence is Superoxide dismutase [Mn], mitochondrial (25 aa).

Histidine 9 lines the Mn(2+) pocket.

It belongs to the iron/manganese superoxide dismutase family. In terms of assembly, homotetramer. Mn(2+) serves as cofactor.

Its subcellular location is the mitochondrion matrix. It carries out the reaction 2 superoxide + 2 H(+) = H2O2 + O2. Destroys superoxide anion radicals which are normally produced within the cells and which are toxic to biological systems. This is Superoxide dismutase [Mn], mitochondrial from Alternaria alternata (Alternaria rot fungus).